Here is a 432-residue protein sequence, read N- to C-terminus: Adenylosuccinate synthetase (432 aa).

GTP contacts are provided by residues 13–19 (GDEGKGK) and 41–43 (GHT). Asp-14 (proton acceptor) is an active-site residue. Mg(2+) is bound by residues Asp-14 and Gly-41. IMP is bound by residues 14-17 (DEGK), 39-42 (NAGH), Thr-130, Arg-144, Gln-225, Thr-240, and Arg-304. The Proton donor role is filled by His-42. 300–306 (ATTGRSR) provides a ligand contact to substrate. GTP-binding positions include Arg-306, 332–334 (KLD), and 415–417 (STG).

The protein belongs to the adenylosuccinate synthetase family. Homodimer. It depends on Mg(2+) as a cofactor.

It is found in the cytoplasm. The catalysed reaction is IMP + L-aspartate + GTP = N(6)-(1,2-dicarboxyethyl)-AMP + GDP + phosphate + 2 H(+). Its pathway is purine metabolism; AMP biosynthesis via de novo pathway; AMP from IMP: step 1/2. Its function is as follows. Plays an important role in the de novo pathway of purine nucleotide biosynthesis. Catalyzes the first committed step in the biosynthesis of AMP from IMP. The protein is Adenylosuccinate synthetase of Yersinia enterocolitica serotype O:8 / biotype 1B (strain NCTC 13174 / 8081).